A 135-amino-acid chain; its full sequence is ATP synthase epsilon chain (135 aa).

It belongs to the ATPase epsilon chain family. F-type ATPases have 2 components, CF(1) - the catalytic core - and CF(0) - the membrane proton channel. CF(1) has five subunits: alpha(3), beta(3), gamma(1), delta(1), epsilon(1). CF(0) has three main subunits: a, b and c.

Its subcellular location is the cell inner membrane. Produces ATP from ADP in the presence of a proton gradient across the membrane. This Bradyrhizobium sp. (strain ORS 278) protein is ATP synthase epsilon chain.